The chain runs to 25 residues: Metallothionein (25 aa).

Positions 3, 5, 11, 13, 18, 20, and 23 each coordinate Cu(+).

Belongs to the metallothionein superfamily. Type 8 family.

In terms of biological role, the metallothioneins are involved in the cellular sequestration of toxic metal ions. Binds six copper (cuprous) ions. The sequence is that of Metallothionein from Agaricus bisporus (White button mushroom).